Consider the following 102-residue polypeptide: A-type ATP synthase subunit F (102 aa).

It belongs to the V-ATPase F subunit family. Has multiple subunits with at least A(3), B(3), C, D, E, F, H, I and proteolipid K(x).

Its subcellular location is the cell membrane. In terms of biological role, component of the A-type ATP synthase that produces ATP from ADP in the presence of a proton gradient across the membrane. This Thermococcus onnurineus (strain NA1) protein is A-type ATP synthase subunit F.